A 739-amino-acid polypeptide reads, in one-letter code: Catalase-peroxidase 2 (739 aa).

A signal peptide spans 1 to 26; sequence MKKSTIPTLSALTLAMSLAFGGSVIA. The tryptophyl-tyrosyl-methioninium (Trp-Tyr) (with M-253) cross-link spans 105 to 227; that stretch reads WHSAGVYRIF…MGATQMGLIY (123 aa). The active-site Proton acceptor is the H106. A cross-link (tryptophyl-tyrosyl-methioninium (Tyr-Met) (with W-105)) is located at residues 227 to 253; the sequence is YVNPEGPNGVPDPLASAKEIRDTFGRM. H268 contacts heme b.

The protein belongs to the peroxidase family. Peroxidase/catalase subfamily. As to quaternary structure, homodimer or homotetramer. Requires heme b as cofactor. In terms of processing, formation of the three residue Trp-Tyr-Met cross-link is important for the catalase, but not the peroxidase activity of the enzyme.

It carries out the reaction H2O2 + AH2 = A + 2 H2O. It catalyses the reaction 2 H2O2 = O2 + 2 H2O. Bifunctional enzyme with both catalase and broad-spectrum peroxidase activity. This Shewanella sp. (strain MR-7) protein is Catalase-peroxidase 2.